A 1215-amino-acid chain; its full sequence is Endoplasmic reticulum transmembrane helix translocase (1215 aa).

Residues 1-27 (MTKKSFVSSPIVRDSTLLVPKSLIAKP) lie on the Cytoplasmic side of the membrane. The helical transmembrane segment at 28–43 (YVLPFFPLYATFAQLY) threads the bilayer. At 44 to 56 (FQQYDRYIKGPEW) the chain is on the lumenal side. A helical transmembrane segment spans residues 57 to 76 (TFVYLGTLVSLNILVMLMPA). The Cytoplasmic portion of the chain corresponds to 77–188 (WNVKIKAKFN…ENSFDIPIPT (112 aa)). Residues 156-185 (KIGDFQKCKGHSGDLTHLKRLYGENSFDIP) are A-domain; part 1. Residues 189-216 (FMELFKEHAVAPLFVFQVFCVALWLLDE) form a helical membrane-spanning segment. A topological domain (lumenal) is located at residue phenylalanine 217. The chain crosses the membrane as a helical span at residues 218–246 (WYYSLFNLFMIISMEAAAVFQRLTALKEF). Residues 247 to 395 (RTMGIKPYTI…IYSAERVSVD (149 aa)) lie on the Cytoplasmic side of the membrane. An A-domain; part 2 region spans residues 250–390 (GIKPYTINVF…LVRVMIYSAE (141 aa)). Position 324 is a phosphoserine (serine 324). Residues 396 to 425 (NKEALMFILFLLIFAVIASWYVWVEGTKMG) form a helical membrane-spanning segment. At 426 to 427 (RI) the chain is on the lumenal side. A run of 2 helical transmembrane segments spans residues 428-442 (QSKL…ITSV) and 446-464 (ELPM…ALAK). The Cytoplasmic portion of the chain corresponds to 465–971 (FYVYCTEPFR…APFTSKLANV (507 aa)). The tract at residues 466–495 (YVYCTEPFRIPFAGRIDVCCFDKTGTLTGE) is P-domain; part 1. Catalysis depends on aspartate 487, which acts as the 4-aspartylphosphate intermediate. The Mg(2+) site is built by aspartate 487 and threonine 489. Residues 487–489 (DKT), phenylalanine 582, arginine 634, aspartate 699, and 816–820 (DGTND) each bind ATP. Residues 497–674 (LVFEGLAGIS…FNGFLIFHCP (178 aa)) are N-domain. A P-domain; part 2 region spans residues 677-837 (DDAIETIKML…HVGIALLNGT (161 aa)). Aspartate 816 contacts Mg(2+). The tract at residues 838–953 (EEGLKKLGEQ…DAQGDEAPAL (116 aa)) is arm-like. A Phosphoserine modification is found at serine 936. A P-domain; part 3 region spans residues 954–969 (KLGDASCAAPFTSKLA). A helical membrane pass occupies residues 972–1011 (SAVTNIIRQGRCALVNTIQMYKILALNCLISAYSLSIIYM). The Lumenal segment spans residues 1012–1017 (AGVKFG). Residues 1018–1035 (DGQATVSGLLLSVCFLSI) form a helical membrane-spanning segment. Residues 1036–1055 (SRGKPLEKLSKQRPQSGIFN) are Cytoplasmic-facing. A helical transmembrane segment spans residues 1056–1084 (VYIMGSILSQFAVHIATLVYITTEIYKLE). Over 1085–1099 (PREPQVDLEKEFAPS) the chain is Lumenal. The helical transmembrane segment at 1100–1121 (LLNTGIFIIQLVQQVSTFAVNY) threads the bilayer. Topologically, residues 1122 to 1133 (QGEPFRENIRSN) are cytoplasmic. The helical transmembrane segment at 1134–1151 (KGMYYGLLGVTGLALASA) threads the bilayer. Residues 1152-1168 (TEFLPELNEAMKFVPMT) lie on the Lumenal side of the membrane. A helical transmembrane segment spans residues 1169 to 1197 (DDFKIKLTLTLLLDFFGSWGVEHFFKFFF). Residues 1198 to 1215 (MDDKPSDISVQQVKIASK) are Cytoplasmic-facing.

It belongs to the cation transport ATPase (P-type) (TC 3.A.3) family. Type V subfamily. Mg(2+) serves as cofactor.

Its subcellular location is the endoplasmic reticulum membrane. The catalysed reaction is [protein]-with a C-terminal TM segment(out) + ATP + H2O = [protein]-with a C-terminal TM segment(in) + ADP + phosphate + H(+). With respect to regulation, the ATPase activity is stimulated by phosphatidylinositol 4-phosphate (PI4P). Its function is as follows. Endoplasmic reticulum translocase required to remove mitochondrial transmembrane proteins mistargeted to the endoplasmic reticulum. Acts as a dislocase that mediates the ATP-dependent extraction of mislocalized mitochondrial transmembrane proteins from the endoplasmic reticulum membrane. Specifically binds mitochondrial tail-anchored transmembrane proteins: has an atypically large substrate-binding pocket that recognizes and binds moderately hydrophobic transmembranes with short hydrophilic lumenal domains. The polypeptide is Endoplasmic reticulum transmembrane helix translocase (Saccharomyces cerevisiae (strain ATCC 204508 / S288c) (Baker's yeast)).